The chain runs to 61 residues: Small ribosomal subunit protein uS14 (61 aa).

Residues Cys24, Cys27, Cys40, and Cys43 each coordinate Zn(2+).

It belongs to the universal ribosomal protein uS14 family. Zinc-binding uS14 subfamily. Part of the 30S ribosomal subunit. Contacts proteins S3 and S10. Requires Zn(2+) as cofactor.

Binds 16S rRNA, required for the assembly of 30S particles and may also be responsible for determining the conformation of the 16S rRNA at the A site. This Finegoldia magna (strain ATCC 29328 / DSM 20472 / WAL 2508) (Peptostreptococcus magnus) protein is Small ribosomal subunit protein uS14.